A 66-amino-acid polypeptide reads, in one-letter code: Large ribosomal subunit protein bL33c (66 aa).

It belongs to the bacterial ribosomal protein bL33 family.

It localises to the plastid. It is found in the chloroplast. In Drimys granadensis, this protein is Large ribosomal subunit protein bL33c.